The chain runs to 596 residues: Pentatricopeptide repeat-containing protein At5g38730 (596 aa).

PPR repeat units follow at residues 132–166 (VSHVFSWLMIYYAKAGMINDSIVVFEQIRSCGLKP), 167–201 (HLQACTVLLNSLVKQRLTDTVWKIFKKMVKLGVVA), 202–236 (NIHVYNVLVHACSKSGDPEKAEKLLSEMEEKGVFP), 237–271 (DIFTYNTLISVYCKKSMHFEALSVQDRMERSGVAP), 272–302 (NIVTYNSFIHGFSREGRMREATRLFREIKDD), 306–340 (NHVTYTTLIDGYCRMNDIDEALRLREVMESRGFSP), 341–375 (GVVTYNSILRKLCEDGRIREANRLLTEMSGKKIEP), 376–410 (DNITCNTLINAYCKIEDMVSAVKVKKKMIESGLKL), 411–445 (DMYSYKALIHGFCKVLELENAKEELFSMIEKGFSP), 446–480 (GYATYSWLVDGFYNQNKQDEITKLLEEFEKRGLCA), 481–515 (DVALYRGLIRRICKLEQVDYAKVLFESMEKKGLVG), and 516–550 (DSVIFTTMAYAYWRTGKVTEASALFDVMYNRRLMV).

It belongs to the PPR family. P subfamily.

The protein is Pentatricopeptide repeat-containing protein At5g38730 of Arabidopsis thaliana (Mouse-ear cress).